The chain runs to 155 residues: Troponin C, isoform 2 (155 aa).

EF-hand domains are found at residues 11-46 (EQIA…MGQP), 47-82 (FDRQ…FIVE), 87-122 (AMQK…LDDQ), and 123-155 (LTEQ…MTGE). Ca(2+) contacts are provided by aspartate 60, aspartate 62, serine 64, arginine 66, and glutamate 71. Aspartate 136, aspartate 138, serine 140, threonine 142, and glutamate 147 together coordinate Ca(2+).

The protein belongs to the troponin C family. Accumulates almost exclusively in larval muscles.

This is Troponin C, isoform 2 (TpnC47D) from Drosophila melanogaster (Fruit fly).